We begin with the raw amino-acid sequence, 220 residues long: uncharacterized protein (220 aa).

A run of 4 helical transmembrane segments spans residues 61 to 81 (LISVLTIPFYVAIIIFISFFG), 85 to 105 (SVMFSVIILGSVLISTCYGAF), 115 to 135 (FVIIQLVFLIYDLILITILLL), and 150 to 170 (LPLEDIPFGTDQVLLGCSLLL).

The protein localises to the membrane. This is an uncharacterized protein from Caenorhabditis elegans.